The primary structure comprises 703 residues: Collagen alpha-2(VIII) chain (703 aa).

The first 28 residues, 1–28 (MLGTLTPLSSLLLLLLVLVLGCGPRASS), serve as a signal peptide directing secretion. The tract at residues 29–76 (GGGAGGAAGYAPVKYIQPMQKGPVGPPFREGKGQYLEMPLPLLPMDLK) is nonhelical region (NC2). The tract at residues 70 to 544 (LLPMDLKGEP…AFDETGIAGL (475 aa)) is disordered. Residues 77–536 (GEPGPPGKPG…PGPPGAPGAF (460 aa)) are triple-helical region. Residues 79–97 (PGPPGKPGPRGPPGPPGFP) are compositionally biased toward pro residues. Residues 166 to 192 (PSGITIPGKPGAQGVPGPPGFQGEPGP) are compositionally biased toward low complexity. The span at 206–224 (GDNGVGQPGLPGAPGQGGA) shows a compositional bias: gly residues. 2 stretches are compositionally biased toward low complexity: residues 265–275 (EPGAVGPKGPP) and 285–297 (AAGL…PSGA). Over residues 433 to 442 (GRPGGPGVAG) the composition is skewed to gly residues. 2 stretches are compositionally biased toward low complexity: residues 444 to 462 (LGQK…RGPS) and 476 to 486 (PQGLPGLKGEP). Positions 506 to 532 (TGPPGVPGSPGITGPPGPPGPPGPPGA) are enriched in pro residues. Residues 537–703 (DETGIAGLHL…SFSGFLLCPT (167 aa)) form a nonhelical region (NC1) region. Positions 570-703 (SAHATPAFTA…SFSGFLLCPT (134 aa)) constitute a C1q domain.

Homotrimers, or heterotrimers in association with alpha 2(VIII) type collagens. Four homotrimers can form a tetrahedron stabilized by central interacting C-terminal NC1 trimers. Post-translationally, proteolytically cleaved by neutrophil elastase, in vitro. Prolines at the third position of the tripeptide repeating unit (G-X-Y) are hydroxylated in some or all of the chains. Expressed primarily in the subendothelium of large blood vessels. Also expressed in arterioles and venules in muscle, heart, kidney, spleen, umbilical cord, liver and lung and is also found in connective tissue layers around hair follicles, around nerve bundles in muscle, in the dura of the optic nerve, in cornea and sclera, and in the perichondrium of cartilaginous tissues. In the kidney, expressed in mesangial cells, glomerular endothelial cells, and tubular epithelial cells. Also expressed in mast cells, and in astrocytes during the repair process. Expressed in Descemet's membrane.

Its subcellular location is the secreted. The protein localises to the extracellular space. It is found in the extracellular matrix. It localises to the basement membrane. Its function is as follows. Macromolecular component of the subendothelium. Major component of the Descemet's membrane (basement membrane) of corneal endothelial cells. Also a component of the endothelia of blood vessels. Necessary for migration and proliferation of vascular smooth muscle cells and thus, has a potential role in the maintenance of vessel wall integrity and structure, in particular in atherogenesis. This chain is Collagen alpha-2(VIII) chain (COL8A2), found in Homo sapiens (Human).